The sequence spans 342 residues: AA9 family lytic polysaccharide monooxygenase H (342 aa).

The signal sequence occupies residues 1-19; that stretch reads MSKASALLAGLTGAALVAA. His-20 and His-106 together coordinate Cu(2+). Intrachain disulfides connect Cys-75/Cys-195 and Cys-117/Cys-121. O2 contacts are provided by His-181 and Gln-190. Tyr-192 contacts Cu(2+). The disordered stretch occupies residues 263 to 308; sequence ATVPGGGGANPTATTTAATSAAPSTTLRTTTTSAAQTTAPPSGDVQ. A compositionally biased stretch (low complexity) spans 272-305; that stretch reads NPTATTTAATSAAPSTTLRTTTTSAAQTTAPPSG. Residues 306-342 enclose the CBM1 domain; that stretch reads DVQTKYGQCGGNGWTGPTVCAPGSSCSVLNEWYSQCL.

Belongs to the polysaccharide monooxygenase AA9 family. Cu(2+) serves as cofactor.

Its subcellular location is the secreted. It catalyses the reaction [(1-&gt;4)-beta-D-glucosyl]n+m + reduced acceptor + O2 = 4-dehydro-beta-D-glucosyl-[(1-&gt;4)-beta-D-glucosyl]n-1 + [(1-&gt;4)-beta-D-glucosyl]m + acceptor + H2O.. Its activity is regulated as follows. The presence of lignin presents a significant source of antioxidants, which probably increase the activity by trapping liberated oxidized fragments. Its function is as follows. Lytic polysaccharide monooxygenase (LPMO) that depolymerizes crystalline and amorphous polysaccharides via the oxidation of scissile alpha- or beta-(1-4)-glycosidic bonds, yielding C1 or C4 oxidation products. Catalysis by LPMOs requires the reduction of the active-site copper from Cu(II) to Cu(I) by a reducing agent and H(2)O(2) or O(2) as a cosubstrate. Hydrolyzes weakly barley beta-glucan, carboxymethyl cellulose, lichenan, wheat arabinoxylan and birchwood xylan. Stimulates the hydrolysis of lignocellulosic substrates (such as hydrothermal pretreated wheat straw or steam-pretreated spruce), when combined with other cellulolytic enzymes. The protein is AA9 family lytic polysaccharide monooxygenase H of Thermothelomyces thermophilus (strain ATCC 42464 / BCRC 31852 / DSM 1799) (Sporotrichum thermophile).